The following is a 56-amino-acid chain: uncharacterized protein (56 aa).

Positions 21 to 38 (HTHTPHPHHTHTHTHHTP) are enriched in basic residues. The tract at residues 21 to 40 (HTHTPHPHHTHTHTHHTPTH) is disordered.

This is an uncharacterized protein from Saccharomyces cerevisiae (strain ATCC 204508 / S288c) (Baker's yeast).